A 301-amino-acid chain; its full sequence is GTP cyclohydrolase FolE2 (301 aa).

The protein belongs to the GTP cyclohydrolase IV family.

It carries out the reaction GTP + H2O = 7,8-dihydroneopterin 3'-triphosphate + formate + H(+). The protein operates within cofactor biosynthesis; 7,8-dihydroneopterin triphosphate biosynthesis; 7,8-dihydroneopterin triphosphate from GTP: step 1/1. In terms of biological role, converts GTP to 7,8-dihydroneopterin triphosphate. The polypeptide is GTP cyclohydrolase FolE2 (Pseudomonas savastanoi pv. phaseolicola (strain 1448A / Race 6) (Pseudomonas syringae pv. phaseolicola (strain 1448A / Race 6))).